A 114-amino-acid polypeptide reads, in one-letter code: Large ribosomal subunit protein bL20c (114 aa).

Belongs to the bacterial ribosomal protein bL20 family.

It localises to the plastid. The protein resides in the chloroplast. In terms of biological role, binds directly to 23S ribosomal RNA and is necessary for the in vitro assembly process of the 50S ribosomal subunit. It is not involved in the protein synthesizing functions of that subunit. The chain is Large ribosomal subunit protein bL20c (rpl20) from Guillardia theta (Cryptophyte).